A 307-amino-acid polypeptide reads, in one-letter code: uncharacterized protein (307 aa).

Positions 1–25 (MKFQKRNIQLVLILLLILNNCFINS) are cleaved as a signal peptide. The tract at residues 60 to 90 (ENNNKNNNNNNNNNNNNNNNNKNSKVKNDDS) is disordered. The segment covering 63–82 (NKNNNNNNNNNNNNNNNNKN) has biased composition (low complexity). N-linked (GlcNAc...) asparagine glycans are attached at residues N124 and N173. A run of 2 helical transmembrane segments spans residues 244–264 (IIFAITFIIFLFTYLIIYYLA) and 275–295 (IIGVLTVFLWVIITLLFTIVI).

The protein resides in the membrane. This is an uncharacterized protein from Dictyostelium discoideum (Social amoeba).